The primary structure comprises 521 residues: Glucose-1-phosphate adenylyltransferase large subunit 3, chloroplastic (521 aa).

The N-terminal 61 residues, 1–61, are a transit peptide targeting the chloroplast; the sequence is MDSCCNFSLG…RKLRPGVAYA (61 aa).

The protein belongs to the bacterial/plant glucose-1-phosphate adenylyltransferase family. In terms of assembly, heterotetramer. In terms of tissue distribution, probably are expressed in roots, flowers and/or seeds.

It is found in the plastid. The protein localises to the chloroplast. The enzyme catalyses alpha-D-glucose 1-phosphate + ATP + H(+) = ADP-alpha-D-glucose + diphosphate. Its pathway is glycan biosynthesis; starch biosynthesis. Its activity is regulated as follows. Activated by 3'phosphoglycerate, inhibited by orthophosphate. Allosteric regulation. Functionally, this protein plays a role in synthesis of starch. It catalyzes the synthesis of the activated glycosyl donor, ADP-glucose from Glc-1-P and ATP. The polypeptide is Glucose-1-phosphate adenylyltransferase large subunit 3, chloroplastic (APL3) (Arabidopsis thaliana (Mouse-ear cress)).